We begin with the raw amino-acid sequence, 257 residues long: Transcriptional regulatory protein TrcR (257 aa).

One can recognise a Response regulatory domain in the interval 33 to 147 (RVLLVDDEPA…ELVARLRGLL (115 aa)). 4-aspartylphosphate is present on aspartate 82. The ompR/PhoB-type DNA-binding region spans 158–255 (DEALRVGDLT…VRGIGYMLRP (98 aa)).

Phosphorylated by TrcS.

In terms of biological role, member of the two-component regulatory system TrcS/TrcR. Activates its own expression by binding specifically to the AT-rich sequence of the trcR promoter region. Also negatively regulates the expression of Rv1057 by binding to an AT-rich sequences within the Rv1057 upstream sequence. The TrcR-TrcS regulatory system may act as a transition regulatory system involved in adapting to an intracellular environment and transitioning from latency to reactivation. In Mycobacterium tuberculosis (strain ATCC 25618 / H37Rv), this protein is Transcriptional regulatory protein TrcR.